The following is a 300-amino-acid chain: Ribosomal protein L11 methyltransferase (300 aa).

S-adenosyl-L-methionine-binding residues include Thr152, Gly173, Asp195, and Asn234.

The protein belongs to the methyltransferase superfamily. PrmA family.

Its subcellular location is the cytoplasm. It catalyses the reaction L-lysyl-[protein] + 3 S-adenosyl-L-methionine = N(6),N(6),N(6)-trimethyl-L-lysyl-[protein] + 3 S-adenosyl-L-homocysteine + 3 H(+). Its function is as follows. Methylates ribosomal protein L11. The chain is Ribosomal protein L11 methyltransferase from Burkholderia cenocepacia (strain HI2424).